We begin with the raw amino-acid sequence, 199 residues long: Desiccation stress protein DSP-22, chloroplastic (199 aa).

The N-terminal 52 residues, 1–52 (MASSTCYATIPAMSCRGQSTITRFGPNNLFLGKQSYELPLMRRNAKFTVRSM), are a transit peptide targeting the chloroplast. Residues 53 to 62 (REDNEKEEQQ) show a composition bias toward basic and acidic residues. The tract at residues 53-82 (REDNEKEEQQQQKQQQTHDGGPDLTPNRTE) is disordered. 2 helical membrane passes run 130–152 (FNGG…LIPI) and 172–191 (IWNG…TEYV).

The protein belongs to the ELIP/psbS family. Preferentially localized in the chloroplast-rich palisade parenchyma cells, in extracts of desiccated leaves, in seeds, but not in roots or untreated leaves.

The protein resides in the plastid. The protein localises to the chloroplast thylakoid membrane. Possibly exerts a protective role during water loss. In Craterostigma plantagineum (Blue gem), this protein is Desiccation stress protein DSP-22, chloroplastic (DSP-22).